Here is a 92-residue protein sequence, read N- to C-terminus: Small ribosomal subunit protein uS19 (92 aa).

It belongs to the universal ribosomal protein uS19 family.

Its function is as follows. Protein S19 forms a complex with S13 that binds strongly to the 16S ribosomal RNA. The polypeptide is Small ribosomal subunit protein uS19 (Pectobacterium atrosepticum (strain SCRI 1043 / ATCC BAA-672) (Erwinia carotovora subsp. atroseptica)).